The chain runs to 525 residues: Ubiquitin carboxyl-terminal hydrolase 22 (525 aa).

The UBP-type zinc-finger motif lies at 21-138 (PGCSHLGSFK…KEEQRKAWKM (118 aa)). Residues Cys-23, His-25, Cys-63, Cys-66, Cys-76, Cys-79, Cys-84, His-89, His-93, His-99, Cys-112, and Cys-115 each contribute to the Zn(2+) site. An N6-acetyllysine modification is found at Lys-129. Thr-147 bears the Phosphothreonine mark. Residues 176 to 520 (RGLINLGNTC…EGYLLFYHKQ (345 aa)) form the USP domain. Residue Cys-185 is the Nucleophile of the active site. Ser-237 is modified (phosphoserine). His-479 functions as the Proton acceptor in the catalytic mechanism.

Belongs to the peptidase C19 family. UBP8 subfamily. Component of some SAGA transcription coactivator-HAT complexes, at least composed of ATXN7, ATXN7L3, ENY2, GCN5L2, SUPT3H, TAF10, TRRAP and USP22. Within the SAGA complex, ATXN7L3, ENY2 and USP22 form a subcomplex required for histone deubiquitination. Interacts directly with ATXN7L3; leading to its recruitment to the SAGA complex. Interacts with ATXN7L3 and weakly with ATXN7L3B. Interacts with MED1. Phosphorylated in G2/M phase, but not in G1 phase by CDK1. In terms of processing, ubiquitinated and subsequently degraded in a CDC20-dependent manner. As to expression, highly expressed in brain and weakly in other organs.

Its subcellular location is the nucleus. It localises to the cytoplasm. It carries out the reaction Thiol-dependent hydrolysis of ester, thioester, amide, peptide and isopeptide bonds formed by the C-terminal Gly of ubiquitin (a 76-residue protein attached to proteins as an intracellular targeting signal).. Deubiquitinase that plays a role in several cellular processes including transcriptional regulation, cell cycle progression or innate immunity. As part of the transcription regulatory histone acetylation (HAT) complex SAGA, catalyzes the deubiquitination of both histones H2A and H2B, thereby acting as a transcriptional coactivator. Recruited to specific gene promoters by activators such as MYC, where it is required for transcription. Facilitates cell-cycle progression by stabilizing CCNB1 and antagonizing its proteasome-mediated degradation in a cell cycle-specific manner. Modulates cell cycle progression and apoptosis also by antagonizing TP53 transcriptional activation through deacetylase SIRT1 stabilization. Plays multiple roles in immunity and inflammation. Participates in antiviral response by deubiquitinating the importin KPNA2, leading to IRF3 nuclear translocation and subsequent type I interferon production. Acts as a central regulator of type III IFN signaling by negatively regulating STING1 activation and ubiquitination. Inhibits NLRP3 inflammasome activation by promoting NLRP3 degradation through ATG5-dependent autophagy. Deubiquitinates CD274 to induce its stabilization and thereby participates in maintenance of immune tolerance to self. Controls necroptotic cell death by regulating RIPK3 phosphorylation and ubiquitination. During bacterial infection, promotes pro-inflammatory response by targeting TRAF6 and removing its 'Lys-48'-linked polyubiquitination. The chain is Ubiquitin carboxyl-terminal hydrolase 22 (Usp22) from Mus musculus (Mouse).